The primary structure comprises 321 residues: Aspartate carbamoyltransferase catalytic subunit (321 aa).

Residues Arg-65 and Thr-66 each coordinate carbamoyl phosphate. Lys-93 contacts L-aspartate. Carbamoyl phosphate is bound by residues Arg-115, His-143, and Gln-146. Positions 176 and 230 each coordinate L-aspartate. Residues Gly-271 and Pro-272 each coordinate carbamoyl phosphate.

It belongs to the aspartate/ornithine carbamoyltransferase superfamily. ATCase family. In terms of assembly, heterododecamer (2C3:3R2) of six catalytic PyrB chains organized as two trimers (C3), and six regulatory PyrI chains organized as three dimers (R2).

It catalyses the reaction carbamoyl phosphate + L-aspartate = N-carbamoyl-L-aspartate + phosphate + H(+). It participates in pyrimidine metabolism; UMP biosynthesis via de novo pathway; (S)-dihydroorotate from bicarbonate: step 2/3. In terms of biological role, catalyzes the condensation of carbamoyl phosphate and aspartate to form carbamoyl aspartate and inorganic phosphate, the committed step in the de novo pyrimidine nucleotide biosynthesis pathway. This Bartonella bacilliformis (strain ATCC 35685 / KC583 / Herrer 020/F12,63) protein is Aspartate carbamoyltransferase catalytic subunit.